The following is a 337-amino-acid chain: RNA 3'-terminal phosphate cyclase (337 aa).

ATP contacts are provided by residues Q101 and 282-285 (HMSD). Catalysis depends on H306, which acts as the Tele-AMP-histidine intermediate.

This sequence belongs to the RNA 3'-terminal cyclase family. Type 1 subfamily.

It is found in the cytoplasm. The enzyme catalyses a 3'-end 3'-phospho-ribonucleotide-RNA + ATP = a 3'-end 2',3'-cyclophospho-ribonucleotide-RNA + AMP + diphosphate. Its function is as follows. Catalyzes the conversion of 3'-phosphate to a 2',3'-cyclic phosphodiester at the end of RNA. The mechanism of action of the enzyme occurs in 3 steps: (A) adenylation of the enzyme by ATP; (B) transfer of adenylate to an RNA-N3'P to produce RNA-N3'PP5'A; (C) and attack of the adjacent 2'-hydroxyl on the 3'-phosphorus in the diester linkage to produce the cyclic end product. The biological role of this enzyme is unknown but it is likely to function in some aspects of cellular RNA processing. In Saccharolobus islandicus (strain M.16.27) (Sulfolobus islandicus), this protein is RNA 3'-terminal phosphate cyclase.